A 475-amino-acid polypeptide reads, in one-letter code: ATP synthase subunit beta (475 aa).

Glycine 156 to threonine 163 contributes to the ATP binding site.

It belongs to the ATPase alpha/beta chains family. F-type ATPases have 2 components, CF(1) - the catalytic core - and CF(0) - the membrane proton channel. CF(1) has five subunits: alpha(3), beta(3), gamma(1), delta(1), epsilon(1). CF(0) has three main subunits: a(1), b(2) and c(9-12). The alpha and beta chains form an alternating ring which encloses part of the gamma chain. CF(1) is attached to CF(0) by a central stalk formed by the gamma and epsilon chains, while a peripheral stalk is formed by the delta and b chains.

It localises to the cell membrane. The enzyme catalyses ATP + H2O + 4 H(+)(in) = ADP + phosphate + 5 H(+)(out). In terms of biological role, produces ATP from ADP in the presence of a proton gradient across the membrane. The catalytic sites are hosted primarily by the beta subunits. This is ATP synthase subunit beta from Mycoplasma pneumoniae (strain ATCC 29342 / M129 / Subtype 1) (Mycoplasmoides pneumoniae).